We begin with the raw amino-acid sequence, 55 residues long: Riparin-1.5 acid (55 aa).

The N-terminal stretch at 1-15 (MKIIVFLAVLMLVSA) is a signal peptide. The propeptide occupies 16–41 (QVCLVSAAEMEHSSDNELSSRDLVKR). Residues cysteine 47 and cysteine 53 are joined by a disulfide bond. Positions 54–55 (NH) are excised as a propeptide.

Expressed by the skin glands.

It is found in the secreted. The protein is Riparin-1.5 acid of Crinia riparia (Streambank froglet).